Consider the following 189-residue polypeptide: uncharacterized protein (189 aa).

The HTH tetR-type domain maps to Ala-9–Val-69. The segment at residues Thr-32–Trp-51 is a DNA-binding region (H-T-H motif).

This is an uncharacterized protein from Mycobacterium bovis (strain ATCC BAA-935 / AF2122/97).